The sequence spans 487 residues: Cyclic AMP-dependent transcription factor ATF-2 (487 aa).

The C2H2-type zinc finger occupies 7 to 31; it reads FLCTAPGCGQRFTNEDHLAVHKHKH. Phosphothreonine; by PKC/PRKCH is present on threonine 34. Serine 44 carries the post-translational modification Phosphoserine; by VRK1. Phosphothreonine is present on residues threonine 51 and threonine 53. Position 55 is a phosphothreonine; by VRK1 (threonine 55). Residues serine 72 and serine 94 each carry the phosphoserine modification. Residue threonine 98 is modified to Phosphothreonine. The residue at position 103 (serine 103) is a Phosphoserine; by PKC/PRKCA and PKC/PRKCB. Disordered stretches follow at residues 107–130 and 241–355; these read EPSVVETTHQDSPLPHPESTTNDE and PGIP…RQKR. At serine 118 the chain carries Phosphoserine. The segment covering 264–275 has biased composition (polar residues); the sequence is LTQQHPPVTNGD. The essential for its histone acetyltransferase activity stretch occupies residues 278-281; that stretch reads KGHG. Low complexity predominate over residues 300 to 316; the sequence is PATSTTETPASPAHTTP. Serine 310 is modified (phosphoserine). Position 322 is a phosphoserine; by PKC/PRKCA and PKC/PRKCB (serine 322). Residues 328 to 345 show a composition bias toward basic and acidic residues; sequence AANEDPDEKRRKFLERNR. The bZIP domain maps to 334–397; the sequence is DEKRRKFLER…AQLKQLLLAH (64 aa). The interval 336–356 is basic motif; sequence KRRKFLERNRAAASRCRQKRK. An N6-acetyllysine modification is found at lysine 339. A Phosphoserine; by PKC/PRKCA and PKC/PRKCB modification is found at serine 349. Lysine 356 is modified (N6-acetyllysine). The tract at residues 362–390 is leucine-zipper; the sequence is LEKKAEDLSSLNGQLQSEVTLLRNEVAQL. A Nuclear export signal motif is present at residues 387–396; the sequence is VAQLKQLLLA. Residues 407-487 form a disordered region; the sequence is KKSGYHTADK…PSSQAQPSGS (81 aa). Phosphoserine occurs at positions 424 and 428. Over residues 425–436 the composition is skewed to polar residues; sequence VPSSPHTEAIQH. Low complexity predominate over residues 437–449; it reads SSVSTSNGVSSTS. Positions 457-470 are enriched in polar residues; sequence SVLTQMADQSTEPA. A phosphoserine; by ATM mark is found at serine 472 and serine 480. Polar residues predominate over residues 478–487; the sequence is PSSQAQPSGS.

The protein belongs to the bZIP family. ATF subfamily. In terms of assembly, binds DNA as a dimer and can form a homodimer in the absence of DNA. Can form a heterodimer with JUN. Heterodimerization is essential for its transcriptional activity. Interacts with SMAD3 and SMAD4. Binds through its N-terminal region to UTF1 which acts as a coactivator of ATF2 transcriptional activity. Interacts with the HK1/VDAC1 complex. Interacts with NBN, MRE11, XPO1, KAT5 and CUL3. Phosphorylation of Thr-51 by MAPK14 and MAPK11, and at Thr-53 by MAPK1/ERK2, MAPK3/ERK1, MAPK11, MAPK12 and MAPK14 in response to external stimulus like insulin causes increased transcriptional activity. Phosphorylated by PLK3 following hyperosmotic stress. Also phosphorylated and activated by JNK and CaMK4. ATM-mediated phosphorylation at Ser-472 and Ser-480 stimulates its function in DNA damage response. Phosphorylation at Ser-44, Thr-55 and Ser-103 activates its transcriptional activity. Phosphorylation at Thr-51 or Thr-53 enhances acetylation of histones H2B and H4.

It localises to the nucleus. It is found in the cytoplasm. The protein localises to the mitochondrion outer membrane. Its function is as follows. Transcriptional activator which regulates the transcription of various genes, including those involved in anti-apoptosis, cell growth, and DNA damage response. Dependent on its binding partner, binds to CRE (cAMP response element) consensus sequences (5'-TGACGTCA-3') or to AP-1 (activator protein 1) consensus sequences (5'-TGACTCA-3'). In the nucleus, contributes to global transcription and the DNA damage response, in addition to specific transcriptional activities that are related to cell development, proliferation and death. In the cytoplasm, interacts with and perturbs HK1- and VDAC1-containing complexes at the mitochondrial outer membrane, thereby impairing mitochondrial membrane potential, inducing mitochondrial leakage and promoting cell death. The phosphorylated form (mediated by ATM) plays a role in the DNA damage response and is involved in the ionizing radiation (IR)-induced S phase checkpoint control and in the recruitment of the MRN complex into the IR-induced foci (IRIF). Exhibits histone acetyltransferase (HAT) activity which specifically acetylates histones H2B and H4 in vitro. In concert with CUL3 and RBX1, promotes the degradation of KAT5 thereby attenuating its ability to acetylate and activate ATM. Can elicit oncogenic or tumor suppressor activities depending on the tissue or cell type. This is Cyclic AMP-dependent transcription factor ATF-2 (Atf2) from Rattus norvegicus (Rat).